Reading from the N-terminus, the 474-residue chain is Dihydrolipoyl dehydrogenase (474 aa).

FAD contacts are provided by residues 34–51, Lys-60, and Gly-124; that span reads EGNP…GGTC. A disulfide bond links Cys-51 and Cys-56. Residues 189-193, Glu-212, Val-246, and 278-281 each bind NAD(+); these read GAGVI and SVGR. 2 residues coordinate FAD: Asp-321 and Ala-329. His-453 serves as the catalytic Proton acceptor.

Belongs to the class-I pyridine nucleotide-disulfide oxidoreductase family. Requires FAD as cofactor.

The protein resides in the cytoplasm. The enzyme catalyses N(6)-[(R)-dihydrolipoyl]-L-lysyl-[protein] + NAD(+) = N(6)-[(R)-lipoyl]-L-lysyl-[protein] + NADH + H(+). In terms of biological role, the branched-chain alpha-keto dehydrogenase complex catalyzes the overall conversion of alpha-keto acids to acyl-CoA and CO(2). It contains multiple copies of 3 enzymatic components: branched-chain alpha-keto acid decarboxylase (E1), lipoamide acyltransferase (E2) and lipoamide dehydrogenase (E3). The protein is Dihydrolipoyl dehydrogenase (odhL) of Cupriavidus necator (strain ATCC 17699 / DSM 428 / KCTC 22496 / NCIMB 10442 / H16 / Stanier 337) (Ralstonia eutropha).